The following is a 223-amino-acid chain: Kinetochore protein Spc25 (223 aa).

Positions 51–119 form a coiled coil; the sequence is RHQRKVGKLQ…NEIMERIQTL (69 aa).

It belongs to the SPC25 family. In terms of assembly, component of the Ndc80 complex, which is composed of Ndc80, Nuf2 and Spc25.

The protein resides in the nucleus. Its subcellular location is the chromosome. It localises to the centromere. The protein localises to the kinetochore. Functionally, acts as a component of the essential kinetochore-associated Ndc80 complex, which is required for chromosome segregation and spindle checkpoint activity during meiosis and mitosis. Required for kinetochore integrity and the organization of stable microtubule binding sites in the outer plate of the kinetochore. Participates in SAC signaling that responds specifically to disruptions in spindle microtubule dynamics. The NDC80 complex synergistically enhances the affinity of the SKA1 complex for microtubules and may allow the NDC80 complex to track depolymerizing microtubules. In Drosophila teissieri (Fruit fly), this protein is Kinetochore protein Spc25.